We begin with the raw amino-acid sequence, 470 residues long: MNPNQKIITIGSISIAIGIISLMLQIGNIISMWASHSIQTGSQNHTGICNQRIITYENSTWVNHTYVNINNTNVVTGKDKTSVTLAGNSSLCSISGWAIYTKDNSIRIGSKGDVFVIREPFISCSHLECRTFFLTQGALLNDKHSNGTVKDRSPYRALMSCPLGEAPSPYNSKFESVAWSASACHDGMGWLTIGISGPDNGAVAVLKYNGIITETIKSWKKRILRTQESECVCVNGSCFTIMTDGPSDGAASYKIFKIEKGKVTKSIELNAPNFHYEECSCYPDTGTVMCVCRDNWHGSNRPWVSFNQNLDYQIGYICSGVFGDNPRPKDGKGSCNPVTVDGADGVKGFSYKYGNGVWIGRTKSNKLRKGFEMIWDPNGWTDTDNDFSVKQDVVAITDWSGYSGSFVQHPELTGLDCIRPCFWVELVRGLPRENATIWTSGSSISFCGVDSDTANWSWPDGAELPFTIDK.

The Intravirion segment spans residues 1-6 (MNPNQK). A helical membrane pass occupies residues 7-27 (IITIGSISIAIGIISLMLQIG). Residues 11 to 33 (GSISIAIGIISLMLQIGNIISMW) are involved in apical transport and lipid raft association. The Virion surface portion of the chain corresponds to 28–470 (NIISMWASHS…GAELPFTIDK (443 aa)). A hypervariable stalk region region spans residues 36-90 (HSIQTGSQNHTGICNQRIITYENSTWVNHTYVNINNTNVVTGKDKTSVTLAGNSS). N-linked (GlcNAc...) asparagine; by host glycosylation is found at N44, N58, N63, N70, and N88. The segment at 91 to 470 (LCSISGWAIY…GAELPFTIDK (380 aa)) is head of neuraminidase. 8 cysteine pairs are disulfide-bonded: C92–C417, C124–C129, C184–C231, C233–C238, C279–C292, C281–C290, C318–C335, and C421–C447. Position 118 (R118) interacts with substrate. The N-linked (GlcNAc...) asparagine; by host glycan is linked to N146. Residue D151 is the Proton donor/acceptor of the active site. A substrate-binding site is contributed by R152. The N-linked (GlcNAc...) asparagine; by host glycan is linked to N235. Residue 277–278 (EE) coordinates substrate. Substrate is bound at residue R293. D294, G298, and D324 together coordinate Ca(2+). Residue R368 coordinates substrate. Y402 serves as the catalytic Nucleophile. 2 N-linked (GlcNAc...) asparagine; by host glycosylation sites follow: N434 and N455.

It belongs to the glycosyl hydrolase 34 family. As to quaternary structure, homotetramer. The cofactor is Ca(2+). In terms of processing, N-glycosylated.

Its subcellular location is the virion membrane. It localises to the host apical cell membrane. The enzyme catalyses Hydrolysis of alpha-(2-&gt;3)-, alpha-(2-&gt;6)-, alpha-(2-&gt;8)- glycosidic linkages of terminal sialic acid residues in oligosaccharides, glycoproteins, glycolipids, colominic acid and synthetic substrates.. Inhibited by the neuraminidase inhibitors zanamivir (Relenza) and oseltamivir (Tamiflu). These drugs interfere with the release of progeny virus from infected cells and are effective against all influenza strains. Resistance to neuraminidase inhibitors is quite rare. In terms of biological role, catalyzes the removal of terminal sialic acid residues from viral and cellular glycoconjugates. Cleaves off the terminal sialic acids on the glycosylated HA during virus budding to facilitate virus release. Additionally helps virus spread through the circulation by further removing sialic acids from the cell surface. These cleavages prevent self-aggregation and ensure the efficient spread of the progeny virus from cell to cell. Otherwise, infection would be limited to one round of replication. Described as a receptor-destroying enzyme because it cleaves a terminal sialic acid from the cellular receptors. May facilitate viral invasion of the upper airways by cleaving the sialic acid moieties on the mucin of the airway epithelial cells. Likely to plays a role in the budding process through its association with lipid rafts during intracellular transport. May additionally display a raft-association independent effect on budding. Plays a role in the determination of host range restriction on replication and virulence. Sialidase activity in late endosome/lysosome traffic seems to enhance virus replication. The sequence is that of Neuraminidase from Aves (Human).